The sequence spans 155 residues: 2-C-methyl-D-erythritol 2,4-cyclodiphosphate synthase (155 aa).

A divalent metal cation contacts are provided by Asp8 and His10. 4-CDP-2-C-methyl-D-erythritol 2-phosphate is bound by residues Asp8–His10 and His34–Ser35. His42 is an a divalent metal cation binding site. 4-CDP-2-C-methyl-D-erythritol 2-phosphate is bound by residues Asp56 to Gly58, Phe61 to Asp65, Ala100 to Leu106, Thr132 to Glu135, Phe139, and Lys142.

It belongs to the IspF family. As to quaternary structure, homotrimer. The cofactor is a divalent metal cation.

The enzyme catalyses 4-CDP-2-C-methyl-D-erythritol 2-phosphate = 2-C-methyl-D-erythritol 2,4-cyclic diphosphate + CMP. Its pathway is isoprenoid biosynthesis; isopentenyl diphosphate biosynthesis via DXP pathway; isopentenyl diphosphate from 1-deoxy-D-xylulose 5-phosphate: step 4/6. Its function is as follows. Involved in the biosynthesis of isopentenyl diphosphate (IPP) and dimethylallyl diphosphate (DMAPP), two major building blocks of isoprenoid compounds. Catalyzes the conversion of 4-diphosphocytidyl-2-C-methyl-D-erythritol 2-phosphate (CDP-ME2P) to 2-C-methyl-D-erythritol 2,4-cyclodiphosphate (ME-CPP) with a corresponding release of cytidine 5-monophosphate (CMP). The protein is 2-C-methyl-D-erythritol 2,4-cyclodiphosphate synthase of Clostridium botulinum (strain ATCC 19397 / Type A).